The sequence spans 95 residues: Small ribosomal subunit protein uS19 (95 aa).

The interval Glu-73–Lys-95 is disordered.

The protein belongs to the universal ribosomal protein uS19 family.

Functionally, protein S19 forms a complex with S13 that binds strongly to the 16S ribosomal RNA. This chain is Small ribosomal subunit protein uS19, found in Deinococcus deserti (strain DSM 17065 / CIP 109153 / LMG 22923 / VCD115).